The following is a 74-amino-acid chain: Peptide BmKa2 (74 aa).

Residues 1 to 24 form the signal peptide; it reads MSSKTLLVLLLVGVLVSTFFTADA.

The protein belongs to the non-disulfide-bridged peptide (NDBP) superfamily. Long chain multifunctional peptide (group 2) family. In terms of tissue distribution, expressed by the venom gland.

The protein resides in the secreted. In terms of biological role, highly acidic peptide that may have antibacterial activity. This Olivierus martensii (Manchurian scorpion) protein is Peptide BmKa2.